Reading from the N-terminus, the 427-residue chain is 3-phosphoshikimate 1-carboxyvinyltransferase (427 aa).

3 residues coordinate 3-phosphoshikimate: Lys20, Ser21, and Arg25. Position 20 (Lys20) interacts with phosphoenolpyruvate. Residues Gly92 and Arg120 each contribute to the phosphoenolpyruvate site. Ser166, Gln168, Asp312, and Lys339 together coordinate 3-phosphoshikimate. Gln168 contributes to the phosphoenolpyruvate binding site. Asp312 (proton acceptor) is an active-site residue. Residues Arg343 and Arg385 each contribute to the phosphoenolpyruvate site.

Belongs to the EPSP synthase family. In terms of assembly, monomer.

Its subcellular location is the cytoplasm. It carries out the reaction 3-phosphoshikimate + phosphoenolpyruvate = 5-O-(1-carboxyvinyl)-3-phosphoshikimate + phosphate. Its pathway is metabolic intermediate biosynthesis; chorismate biosynthesis; chorismate from D-erythrose 4-phosphate and phosphoenolpyruvate: step 6/7. In terms of biological role, catalyzes the transfer of the enolpyruvyl moiety of phosphoenolpyruvate (PEP) to the 5-hydroxyl of shikimate-3-phosphate (S3P) to produce enolpyruvyl shikimate-3-phosphate and inorganic phosphate. The protein is 3-phosphoshikimate 1-carboxyvinyltransferase of Streptococcus pneumoniae (strain Hungary19A-6).